The primary structure comprises 78 residues: Small ribosomal subunit protein bS21A (78 aa).

Basic and acidic residues predominate over residues 30–52 (MKARSAYEKPSEKRAREKGEAVR). A disordered region spans residues 30–78 (MKARSAYEKPSEKRAREKGEAVRRQRKLARKKLQREGLLPAPKKAVRAR). Residues 53–62 (RQRKLARKKL) are compositionally biased toward basic residues.

Belongs to the bacterial ribosomal protein bS21 family.

The sequence is that of Small ribosomal subunit protein bS21A from Rhizobium etli (strain ATCC 51251 / DSM 11541 / JCM 21823 / NBRC 15573 / CFN 42).